Consider the following 190-residue polypeptide: Probable chorismate pyruvate-lyase (190 aa).

Substrate contacts are provided by arginine 74, leucine 112, and glutamate 173.

The protein belongs to the UbiC family.

The protein resides in the cytoplasm. It carries out the reaction chorismate = 4-hydroxybenzoate + pyruvate. It participates in cofactor biosynthesis; ubiquinone biosynthesis. Functionally, removes the pyruvyl group from chorismate, with concomitant aromatization of the ring, to provide 4-hydroxybenzoate (4HB) for the ubiquinone pathway. This Bordetella bronchiseptica (strain ATCC BAA-588 / NCTC 13252 / RB50) (Alcaligenes bronchisepticus) protein is Probable chorismate pyruvate-lyase.